The chain runs to 478 residues: UDP-N-acetylmuramate--L-alanine ligase (478 aa).

ATP is bound at residue 112–118; it reads GTHGKTT.

Belongs to the MurCDEF family.

The protein localises to the cytoplasm. It catalyses the reaction UDP-N-acetyl-alpha-D-muramate + L-alanine + ATP = UDP-N-acetyl-alpha-D-muramoyl-L-alanine + ADP + phosphate + H(+). Its pathway is cell wall biogenesis; peptidoglycan biosynthesis. Its function is as follows. Cell wall formation. This chain is UDP-N-acetylmuramate--L-alanine ligase, found in Polaromonas naphthalenivorans (strain CJ2).